The following is a 268-amino-acid chain: Tryptophan synthase alpha chain (268 aa).

Catalysis depends on proton acceptor residues E49 and D60.

The protein belongs to the TrpA family. As to quaternary structure, tetramer of two alpha and two beta chains.

It catalyses the reaction (1S,2R)-1-C-(indol-3-yl)glycerol 3-phosphate + L-serine = D-glyceraldehyde 3-phosphate + L-tryptophan + H2O. It participates in amino-acid biosynthesis; L-tryptophan biosynthesis; L-tryptophan from chorismate: step 5/5. In terms of biological role, the alpha subunit is responsible for the aldol cleavage of indoleglycerol phosphate to indole and glyceraldehyde 3-phosphate. The protein is Tryptophan synthase alpha chain of Photorhabdus laumondii subsp. laumondii (strain DSM 15139 / CIP 105565 / TT01) (Photorhabdus luminescens subsp. laumondii).